An 869-amino-acid polypeptide reads, in one-letter code: Ubiquitin carboxyl-terminal hydrolase 29 (869 aa).

Composition is skewed to polar residues over residues S104–Q120 and S140–P150. Positions S104 to K226 are disordered. Positions V187–K200 are enriched in basic and acidic residues. Residues K201–G212 are compositionally biased toward basic residues. Over residues G213–K226 the composition is skewed to basic and acidic residues. Residues E289–N826 enclose the USP domain. Catalysis depends on C298, which acts as the Nucleophile. The tract at residues S723–D754 is disordered. H781 (proton acceptor) is an active-site residue.

It belongs to the peptidase C19 family. Predominantly expressed in brain and testis. Highest expression levels in adult brain, especially in the cerebral cortex and hippocampus, and in the forebrain, face, and limb buds of midgestation mouse embryos.

The protein resides in the cytoplasm. It is found in the perinuclear region. It catalyses the reaction Thiol-dependent hydrolysis of ester, thioester, amide, peptide and isopeptide bonds formed by the C-terminal Gly of ubiquitin (a 76-residue protein attached to proteins as an intracellular targeting signal).. Functionally, deubiquitinase involved in innate antiviral immunity by mediating 'Lys-48'-linked deubiquitination of CGAS, thereby promoting its stabilization. The chain is Ubiquitin carboxyl-terminal hydrolase 29 from Mus musculus (Mouse).